The primary structure comprises 560 residues: Hypermethylated in cancer 2 protein (560 aa).

A BTB domain is found at Cys-24–Asp-87. Disordered regions lie at residues Arg-122 to Arg-163 and His-183 to Asn-367. Polar residues-rich tracts occupy residues Asn-126 to Ser-153 and His-183 to Cys-203. Positions Glu-224–Ser-242 are enriched in low complexity. Positions Thr-243–Thr-259 are enriched in polar residues. Positions Pro-296–Arg-308 are enriched in basic and acidic residues. Residues Glu-348–Asn-362 show a composition bias toward low complexity. 5 C2H2-type zinc fingers span residues Tyr-387–His-409, Phe-450–His-472, Phe-478–His-500, Phe-506–His-528, and Tyr-534–His-556.

Belongs to the krueppel C2H2-type zinc-finger protein family. Hic subfamily.

Its subcellular location is the nucleus. Transcriptional repressor. The sequence is that of Hypermethylated in cancer 2 protein (hic2) from Danio rerio (Zebrafish).